Reading from the N-terminus, the 57-residue chain is uncharacterized protein (57 aa).

A helical membrane pass occupies residues 34–54 (AALLDAAALVVIPGLLTAAAV).

The protein localises to the membrane. This is an uncharacterized protein from Dictyostelium discoideum (Social amoeba).